A 683-amino-acid polypeptide reads, in one-letter code: Solute carrier organic anion transporter family member 2B1 (683 aa).

The interval 1-30 (MPDRSTKTTMGTEDMHERKVSVEPQDSHQD) is disordered. Topologically, residues 1–41 (MPDRSTKTTMGTEDMHERKVSVEPQDSHQDAQPRGMFHNIK) are cytoplasmic. The span at 13-30 (EDMHERKVSVEPQDSHQD) shows a compositional bias: basic and acidic residues. S21 is modified (phosphoserine). Residues 42-61 (FFVLCHSLLQLTQLMISGYL) form a helical membrane-spanning segment. Residues 62–80 (KSSISTVEKRFGLSSQISG) lie on the Extracellular side of the membrane. A helical membrane pass occupies residues 81–101 (LLAAFNEVGNVSLILFVSYFG). Over 102-107 (SRVHRP) the chain is Cytoplasmic. A helical transmembrane segment spans residues 108 to 132 (RMIGYGALLVATAGLLMALPHFISE). At 133–177 (PYRYDHSSSDNRSLDFEASLCLPTTMAPASALSNGSCSSHTETKH) the chain is on the extracellular side. N-linked (GlcNAc...) asparagine glycans are attached at residues N143 and N166. A helical transmembrane segment spans residues 178–207 (LTMVGIMFAAQTLLGIGGVPIQPFGISYID). The Cytoplasmic segment spans residues 208–226 (DFAHHSNSPLYIGILFGIT). Residues 227–247 (TMGPGLAYGLGSLMLRLYVDI) form a helical membrane-spanning segment. Residues 248–265 (DRMPEGGINLTPKDPRWV) are Extracellular-facing. The chain crosses the membrane as a helical span at residues 266–290 (GAWWLGFLISSGLVVLASSPYFFFP). At 291 to 355 (REMPKEKHEF…VKVFPRVLLR (65 aa)) the chain is on the cytoplasmic side. Phosphoserine occurs at positions 312 and 315. Residues 356 to 377 (NLRHPIFLLVVLSQVCTSSMVA) form a helical membrane-spanning segment. Over 378–397 (GMATFLPKFLERQFSITASF) the chain is Extracellular. Residues 398–421 (ANMLLGCLTIPLVIVGIMMGGVLV) form a helical membrane-spanning segment. Residues 422–425 (KRLH) are Cytoplasmic-facing. Residues 426–449 (LSPVQCSALCLLGSLLCLLFSVPL) traverse the membrane as a helical segment. Residues 450–553 (FFIGCSTHQI…SACSRLVLPF (104 aa)) lie on the Extracellular side of the membrane. Residues 472–532 (PSLFPGCSEP…VFYTNCSCVA (61 aa)) enclose the Kazal-like domain. 3 cysteine pairs are disulfide-bonded: C478-C509, C484-C505, and C493-C530. Residues N527 and N534 are each glycosylated (N-linked (GlcNAc...) asparagine). The chain crosses the membrane as a helical span at residues 554 to 576 (IVLFSLGAGLASITHTPSFMLIL). At 577–585 (RGVKKEDKT) the chain is on the cytoplasmic side. The chain crosses the membrane as a helical span at residues 586–611 (LAVGMQFMLLRVLAWMPSPVIHGSAI). The Extracellular segment spans residues 612 to 644 (DTTCVHWALTCGRRAVCRYYDHDLLRNRFIGLQ). The helical transmembrane segment at 645–662 (FFFKSGSLVCFTLVLAIL) threads the bilayer. The Cytoplasmic portion of the chain corresponds to 663-683 (RQQSREASTRTTVKSSELQQL).

Belongs to the organo anion transporter (TC 2.A.60) family. In terms of tissue distribution, expressed in liver, kidney, small intestine mucosa, large intestine, brain, lung, spleen, stomach and heart.

The protein localises to the cell membrane. It localises to the basal cell membrane. Its subcellular location is the apical cell membrane. It catalyses the reaction dehydroepiandrosterone 3-sulfate(out) = dehydroepiandrosterone 3-sulfate(in). It carries out the reaction estrone 3-sulfate(out) = estrone 3-sulfate(in). The catalysed reaction is estrone 3-sulfate(out) + hydrogencarbonate(in) = estrone 3-sulfate(in) + hydrogencarbonate(out). The enzyme catalyses taurocholate(out) = taurocholate(in). It catalyses the reaction coproporphyrin III(out) = coproporphyrin III(in). It carries out the reaction substance P(out) = substance P(in). The catalysed reaction is pregnenolone sulfate(out) = pregnenolone sulfate(in). The enzyme catalyses prostaglandin E2(out) = prostaglandin E2(in). It catalyses the reaction prostaglandin D2(out) = prostaglandin D2(in). It carries out the reaction L-thyroxine(out) = L-thyroxine(in). Functionally, mediates the Na(+)-independent transport of steroid sulfate conjugates such as estrone 3-sulfate (E1S), dehydroepiandrosterone sulfate (DHEA-S) and pregnenolone sulfate (PregS) and other specific organic anions. Responsible for the transport of E1S through the basal membrane of syncytiotrophoblast, highlighting a potential role in the placental absorption of fetal-derived sulfated steroids including DHEA-S. Also facilitates the uptake of sulfated steroids at the basal/sinusoidal membrane of hepatocytes, therefore accounting for the major part of organic anions clearance of liver. Mediates the intestinal uptake of sulfated steroids. Mediates the uptake of the neurosteroids DHEA-S and PregS into the endothelial cells of the blood-brain barrier as the first step to enter the brain. Also plays a role in the reuptake of neuropeptides such as substance P/TAC1 and vasoactive intestinal peptide/VIP released from retinal neurons. May act as a heme transporter that promotes cellular iron availability. Also transports heme by-product coproporphyrin III (CPIII), and may be involved in their hepatic disposition. Mediates the uptake of other substrates such as prostaglandins D2 (PGD2), E1 (PGE1) and E2 (PGE2), taurocholate, L-thyroxine, leukotriene C4 and thromboxane B2. May contribute to regulate the transport of organic compounds in testis across the blood-testis-barrier. Shows a pH-sensitive substrate specificity which may be ascribed to the protonation state of the binding site and leads to a stimulation of substrate transport in an acidic microenvironment. The exact transport mechanism has not been yet deciphered but most likely involves an anion exchange, coupling the cellular uptake of organic substrate with the efflux of an anionic compound. Hydrogencarbonate/HCO3(-) acts as a probable counteranion that exchanges for organic anions. Cytoplasmic glutamate may also act as counteranion in the placenta. An inwardly directed proton gradient has also been proposed as the driving force of E1S uptake with a (H(+):E1S) stoichiometry of (1:1). The protein is Solute carrier organic anion transporter family member 2B1 of Mus musculus (Mouse).